Consider the following 195-residue polypeptide: Thymidine kinase (195 aa).

ATP is bound by residues 9 to 16 and 87 to 90; these read STMNAGKS and DEAQ. Glu88 (proton acceptor) is an active-site residue. Zn(2+)-binding residues include Cys145, Cys147, Cys182, and His185.

The protein belongs to the thymidine kinase family. Homotetramer.

It is found in the cytoplasm. The enzyme catalyses thymidine + ATP = dTMP + ADP + H(+). This chain is Thymidine kinase, found in Mannheimia succiniciproducens (strain KCTC 0769BP / MBEL55E).